The primary structure comprises 409 residues: Torsin-4A (409 aa).

Positions 1–16 (MGEQDPSDRLRGDQLK) are enriched in basic and acidic residues. Disordered stretches follow at residues 1–28 (MGEQ…SFSQ) and 75–99 (DNLH…KGRV). Residues 17 to 28 (EPNQNGKGSFSQ) are compositionally biased toward polar residues. Residues 88–98 (PRKRKKKRKGR) are compositionally biased toward basic residues. The helical transmembrane segment at 120–136 (CLYLLCIIVFLQVYNAI) threads the bilayer. 192–199 (GPTGVGKS) provides a ligand contact to ATP.

The protein belongs to the ClpA/ClpB family. Torsin subfamily.

Its subcellular location is the membrane. The polypeptide is Torsin-4A (tor4a) (Danio rerio (Zebrafish)).